The chain runs to 366 residues: Ferredoxin--NADP reductase (366 aa).

Residues Asp-51, Gln-59, Tyr-64, Val-104, Phe-139, Asp-308, and Thr-349 each coordinate FAD.

It belongs to the ferredoxin--NADP reductase type 2 family. In terms of assembly, homodimer. The cofactor is FAD.

The catalysed reaction is 2 reduced [2Fe-2S]-[ferredoxin] + NADP(+) + H(+) = 2 oxidized [2Fe-2S]-[ferredoxin] + NADPH. In Polaromonas sp. (strain JS666 / ATCC BAA-500), this protein is Ferredoxin--NADP reductase.